A 332-amino-acid chain; its full sequence is Ribosomal RNA small subunit methyltransferase C (332 aa).

The protein belongs to the methyltransferase superfamily. RsmC family. In terms of assembly, monomer.

The protein resides in the cytoplasm. It carries out the reaction guanosine(1207) in 16S rRNA + S-adenosyl-L-methionine = N(2)-methylguanosine(1207) in 16S rRNA + S-adenosyl-L-homocysteine + H(+). Specifically methylates the guanine in position 1207 of 16S rRNA in the 30S particle. The sequence is that of Ribosomal RNA small subunit methyltransferase C from Pseudomonas putida (strain GB-1).